Here is a 276-residue protein sequence, read N- to C-terminus: Dermonecrotic toxin LsaSicTox-alphaIB2i (276 aa).

His5 is an active-site residue. Mg(2+)-binding residues include Glu25 and Asp27. His41 (nucleophile) is an active-site residue. Cystine bridges form between Cys45–Cys51 and Cys47–Cys190. Asp85 provides a ligand contact to Mg(2+). 2 N-linked (GlcNAc...) asparagine glycosylation sites follow: Asn129 and Asn253.

This sequence belongs to the arthropod phospholipase D family. Class II subfamily. Mg(2+) is required as a cofactor. As to expression, expressed by the venom gland.

It is found in the secreted. It catalyses the reaction an N-(acyl)-sphingosylphosphocholine = an N-(acyl)-sphingosyl-1,3-cyclic phosphate + choline. It carries out the reaction an N-(acyl)-sphingosylphosphoethanolamine = an N-(acyl)-sphingosyl-1,3-cyclic phosphate + ethanolamine. The enzyme catalyses a 1-acyl-sn-glycero-3-phosphocholine = a 1-acyl-sn-glycero-2,3-cyclic phosphate + choline. The catalysed reaction is a 1-acyl-sn-glycero-3-phosphoethanolamine = a 1-acyl-sn-glycero-2,3-cyclic phosphate + ethanolamine. In terms of biological role, dermonecrotic toxins cleave the phosphodiester linkage between the phosphate and headgroup of certain phospholipids (sphingolipid and lysolipid substrates), forming an alcohol (often choline) and a cyclic phosphate. This toxin acts on sphingomyelin (SM). It may also act on ceramide phosphoethanolamine (CPE), lysophosphatidylcholine (LPC) and lysophosphatidylethanolamine (LPE), but not on lysophosphatidylserine (LPS), and lysophosphatidylglycerol (LPG). It acts by transphosphatidylation, releasing exclusively cyclic phosphate products as second products. Induces dermonecrosis, hemolysis, increased vascular permeability, edema, inflammatory response, and platelet aggregation. The chain is Dermonecrotic toxin LsaSicTox-alphaIB2i from Loxosceles sabina (Tucson recluse spider).